Reading from the N-terminus, the 253-residue chain is Imidazole glycerol phosphate synthase subunit HisF (253 aa).

Catalysis depends on residues D11 and D130.

The protein belongs to the HisA/HisF family. Heterodimer of HisH and HisF.

The protein localises to the cytoplasm. It catalyses the reaction 5-[(5-phospho-1-deoxy-D-ribulos-1-ylimino)methylamino]-1-(5-phospho-beta-D-ribosyl)imidazole-4-carboxamide + L-glutamine = D-erythro-1-(imidazol-4-yl)glycerol 3-phosphate + 5-amino-1-(5-phospho-beta-D-ribosyl)imidazole-4-carboxamide + L-glutamate + H(+). The protein operates within amino-acid biosynthesis; L-histidine biosynthesis; L-histidine from 5-phospho-alpha-D-ribose 1-diphosphate: step 5/9. In terms of biological role, IGPS catalyzes the conversion of PRFAR and glutamine to IGP, AICAR and glutamate. The HisF subunit catalyzes the cyclization activity that produces IGP and AICAR from PRFAR using the ammonia provided by the HisH subunit. The sequence is that of Imidazole glycerol phosphate synthase subunit HisF from Acidobacterium capsulatum (strain ATCC 51196 / DSM 11244 / BCRC 80197 / JCM 7670 / NBRC 15755 / NCIMB 13165 / 161).